We begin with the raw amino-acid sequence, 181 residues long: ADP-ribosylation factor 1 (181 aa).

The N-myristoyl glycine moiety is linked to residue G2. The important for the stable binding to the membranes stretch occupies residues 3–16 (LYVSRLFNRLFQKK). Residues 27–32 (AAGKTT), 126–129 (NKQD), and A160 each bind GTP.

It belongs to the small GTPase superfamily. Arf family. As to quaternary structure, may interact with GTPase RAB5b.

The protein resides in the golgi apparatus membrane. The catalysed reaction is GTP + H2O = GDP + phosphate + H(+). Its activity is regulated as follows. Alternates between an inactive GDP-bound form and an active GTP-bound form. Intrinsic GTPase activity is almost undetectable in vitro. Activated by a guanine nucleotide-exchange factor (GEF) and inactivated by GTPase-activating protein ARFGAP1. In terms of biological role, small GTPase involved in protein trafficking between different compartments. Modulates vesicle budding and uncoating within the Golgi complex. In its GTP-bound form, triggers the recruitment of coatomer proteins to the Golgi membrane. The hydrolysis of ARF1-bound GTP, which is mediated by ARFGAPs proteins, is required for dissociation of coat proteins from Golgi membranes and vesicles. Regulates the transport of N-acylated AK2 to the parasitophorous vacuole membrane. May be involved in the activation of lipid kinase PIP5K. This is ADP-ribosylation factor 1 from Plasmodium falciparum (isolate 3D7).